Here is a 514-residue protein sequence, read N- to C-terminus: Phospholipase C D (514 aa).

The segment at residues 1–37 is a signal peptide (tat-type signal); that stretch reads MSQSHIGGVSRREFLAKVAAGGAGALMSFAGPVIEKA. Residues 492 to 514 are disordered; the sequence is VPDPQIMPTQETTPTRGIPSGPC.

It belongs to the bacterial phospholipase C family. In terms of processing, predicted to be exported by the Tat system. The position of the signal peptide cleavage has not been experimentally proven.

The protein resides in the secreted. The protein localises to the cell wall. It carries out the reaction a 1,2-diacyl-sn-glycero-3-phosphocholine + H2O = phosphocholine + a 1,2-diacyl-sn-glycerol + H(+). In terms of biological role, involved in virulence. Induces cytotoxic effects on mouse macrophage cell lines, via direct or indirect enzymatic hydrolysis of cell membrane phospholipids. Hydrolyzes phosphatidylcholine. This is Phospholipase C D from Mycobacterium tuberculosis (strain CDC 1551 / Oshkosh).